A 507-amino-acid chain; its full sequence is Histidine ammonia-lyase (507 aa).

The 5-imidazolinone (Ala-Gly) cross-link spans 142-144 (ASG). A 2,3-didehydroalanine (Ser) modification is found at S143.

Belongs to the PAL/histidase family. Contains an active site 4-methylidene-imidazol-5-one (MIO), which is formed autocatalytically by cyclization and dehydration of residues Ala-Ser-Gly.

It is found in the cytoplasm. The enzyme catalyses L-histidine = trans-urocanate + NH4(+). It functions in the pathway amino-acid degradation; L-histidine degradation into L-glutamate; N-formimidoyl-L-glutamate from L-histidine: step 1/3. The protein is Histidine ammonia-lyase of Symbiobacterium thermophilum (strain DSM 24528 / JCM 14929 / IAM 14863 / T).